Here is a 259-residue protein sequence, read N- to C-terminus: Binding partner of ACD11 1 (259 aa).

The RRM domain occupies 6-77 (RSVKVGNLSS…QSVIIELAPN (72 aa)). Residues 219–259 (GEVGQKTKEKVEAEQPSQPAQSQQQLPEGYSPIHSSEYSKN) are disordered. Residues 232 to 243 (EQPSQPAQSQQQ) show a composition bias toward low complexity.

Interacts with ACD11, PR1F2 and PR1F3.

The protein resides in the cytoplasm. It is found in the membrane. The polypeptide is Binding partner of ACD11 1 (BPA1) (Arabidopsis thaliana (Mouse-ear cress)).